Here is a 360-residue protein sequence, read N- to C-terminus: Peptide chain release factor 1 (360 aa).

An N5-methylglutamine modification is found at Gln235.

It belongs to the prokaryotic/mitochondrial release factor family. Post-translationally, methylated by PrmC. Methylation increases the termination efficiency of RF1.

Its subcellular location is the cytoplasm. Functionally, peptide chain release factor 1 directs the termination of translation in response to the peptide chain termination codons UAG and UAA. The polypeptide is Peptide chain release factor 1 (Cupriavidus pinatubonensis (strain JMP 134 / LMG 1197) (Cupriavidus necator (strain JMP 134))).